The sequence spans 156 residues: ATP synthase subunit b (156 aa).

The helical transmembrane segment at 7–26 (ILGQAIAFVLFVWFCMKYVW) threads the bilayer.

It belongs to the ATPase B chain family. As to quaternary structure, F-type ATPases have 2 components, F(1) - the catalytic core - and F(0) - the membrane proton channel. F(1) has five subunits: alpha(3), beta(3), gamma(1), delta(1), epsilon(1). F(0) has three main subunits: a(1), b(2) and c(10-14). The alpha and beta chains form an alternating ring which encloses part of the gamma chain. F(1) is attached to F(0) by a central stalk formed by the gamma and epsilon chains, while a peripheral stalk is formed by the delta and b chains.

The protein localises to the cell inner membrane. In terms of biological role, f(1)F(0) ATP synthase produces ATP from ADP in the presence of a proton or sodium gradient. F-type ATPases consist of two structural domains, F(1) containing the extramembraneous catalytic core and F(0) containing the membrane proton channel, linked together by a central stalk and a peripheral stalk. During catalysis, ATP synthesis in the catalytic domain of F(1) is coupled via a rotary mechanism of the central stalk subunits to proton translocation. Component of the F(0) channel, it forms part of the peripheral stalk, linking F(1) to F(0). In Pectobacterium atrosepticum (strain SCRI 1043 / ATCC BAA-672) (Erwinia carotovora subsp. atroseptica), this protein is ATP synthase subunit b.